The sequence spans 389 residues: Probable tRNA pseudouridine synthase D 1 (389 aa).

Asp63 functions as the Nucleophile in the catalytic mechanism. The region spanning 135–345 is the TRUD domain; sequence GAPNYYDDQR…KYTKRPIISI (211 aa).

Belongs to the pseudouridine synthase TruD family.

It catalyses the reaction uridine(13) in tRNA = pseudouridine(13) in tRNA. Could be responsible for synthesis of pseudouridine from uracil-13 in transfer RNAs. This Methanococcus maripaludis (strain DSM 14266 / JCM 13030 / NBRC 101832 / S2 / LL) protein is Probable tRNA pseudouridine synthase D 1 (truD1).